Reading from the N-terminus, the 304-residue chain is MRLIFMGTPDFSVPALHALLDAGHEVVAVYTQPPRPAGRGKALRRSPVHEAAEAAGIEVRTPARVRRDTAEHEAFAALNADAAVVAAYGLILPKAMLDAPRLGCLNIHASLLPRWRGASPIQSAIVAGDSQSGVSIMQMDEGLDTGAVLLEEATPISATDTASTLHDRLSEIGGRLVVRALAEQPKPVPQPEDGVTYAERLTRDHGRIDWTRSAAEIDRQIRGLTPWPGAFTTLDDVVLKIGAATPLPAESHSAAPGTTLGESLTIACGTGALRIDRLQKPGRSMMSASDFLRGQPVPKGTRLV.

110-113 (SLLP) is a (6S)-5,6,7,8-tetrahydrofolate binding site.

Belongs to the Fmt family.

It carries out the reaction L-methionyl-tRNA(fMet) + (6R)-10-formyltetrahydrofolate = N-formyl-L-methionyl-tRNA(fMet) + (6S)-5,6,7,8-tetrahydrofolate + H(+). Its function is as follows. Attaches a formyl group to the free amino group of methionyl-tRNA(fMet). The formyl group appears to play a dual role in the initiator identity of N-formylmethionyl-tRNA by promoting its recognition by IF2 and preventing the misappropriation of this tRNA by the elongation apparatus. This chain is Methionyl-tRNA formyltransferase, found in Gluconobacter oxydans (strain 621H) (Gluconobacter suboxydans).